Reading from the N-terminus, the 477-residue chain is POC1 centriolar protein homolog B (477 aa).

7 WD repeats span residues 16-55 (GHKAAITSADFSPNCKQIATASWDTFLMLWSLKPHARAYR), 58-97 (GHKDVVTSLQFSPQGNLLASASRDKTVRLWVLDRKGKSSE), 100-139 (AHTAPVRSVDFSADGQFLVTASEDKSIKVWSMYRQRFLYS), 142-181 (RHTHWVRCAKFSPDGRLIVSCSEDKTIKIWDTTSKQCVNN), 183-223 (SDSV…LLQH), 226-265 (VHSCGVNCLSFHPSGNSLVTASSDGTVKILDLVEGRLIYT), and 268-307 (GHTGPVFTVSFSKDGELFTSGGADAQVLVWRTSFNQVHYR). A coiled-coil region spans residues 449-469 (EQRLSLTEDKLKDCLENQQKL).

This sequence belongs to the WD repeat POC1 family. Interacts with POC1A. Interacts with FAM161A. Interacts with CEP44; the interaction is direct and recruits POC1B to centriolar microtubules. Forms a microtubule-associated complex with POC5, CETN2 and FAM161A. Interacts with CCDC15. In terms of processing, phosphorylated in mitotic cells that may be mediated by CDK1.

The protein resides in the cytoplasm. Its subcellular location is the cytoskeleton. It is found in the microtubule organizing center. The protein localises to the centrosome. It localises to the centriole. The protein resides in the cilium basal body. Its subcellular location is the spindle pole. Functionally, plays an important role in centriole assembly and/or stability and ciliogenesis. Involved in early steps of centriole duplication, as well as in the later steps of centriole length control. Acts in concert with POC1A to ensure centriole integrity and proper mitotic spindle formation. Required for primary cilia formation, ciliary length and also cell proliferation. Required for retinal integrity. Acts as a positive regulator of centriole elongation. The protein is POC1 centriolar protein homolog B (Poc1b) of Rattus norvegicus (Rat).